Here is an 861-residue protein sequence, read N- to C-terminus: Oleate activated transcription factor 3 (861 aa).

Positions 19 to 47 (NCKKRKSKCDRTKPCGTCVRLGDVDSCVY) form a DNA-binding region, zn(2)-C6 fungal-type. The segment covering 52–61 (SGQPESSPSL) has biased composition (polar residues). Positions 52-99 (SGQPESSPSLNDADPLRKQSTPAERISPGFIKKRRSSQTRQDEDHWQR) are disordered.

Belongs to the OAF3 family.

The protein localises to the cytoplasm. It is found in the nucleus. Its subcellular location is the mitochondrion. Its function is as follows. Transcriptional inhibitor with a significantly increased number of target genes in response to oleate. The chain is Oleate activated transcription factor 3 (OAF3) from Saccharomyces cerevisiae (strain JAY291) (Baker's yeast).